The chain runs to 237 residues: Putative HTH-type transcriptional regulator ycf28 (237 aa).

In terms of domain architecture, HTH crp-type spans 155 to 228 (KSITNRLISL…KKKVIIHDPI (74 aa)). Residues 188–207 (HKVLAQIIGSNRVSITRIIS) constitute a DNA-binding region (H-T-H motif).

It is found in the plastid. It localises to the chloroplast. This chain is Putative HTH-type transcriptional regulator ycf28 (ycf28), found in Porphyra purpurea (Red seaweed).